The following is a 201-amino-acid chain: Esterase TesA (201 aa).

Residues 1–21 (MRALLLSGCLALVLLTQQAAA) form the signal peptide. Serine 30 functions as the Nucleophile in the catalytic mechanism. Residues aspartate 177 and histidine 180 contribute to the active site.

Belongs to the 'GDSL' lipolytic enzyme family.

Its subcellular location is the secreted. The catalysed reaction is a carboxylic ester + H2O = an alcohol + a carboxylate + H(+). Its function is as follows. Esterase that exhibits the highest activity towards Tween detergents and p-nitrophenyl esters of short acyl chain length. Also displays a low thioesterase activity towards palmitoyl-coenzyme A, but is not active towards acetyl-coenzyme A. This is Esterase TesA (tesA) from Pseudomonas aeruginosa (strain ATCC 15692 / DSM 22644 / CIP 104116 / JCM 14847 / LMG 12228 / 1C / PRS 101 / PAO1).